We begin with the raw amino-acid sequence, 727 residues long: MRPLLLLALLGWLLLAEAKGDAKPEDNLLVLTVATKETEGFRRFKRSAQFFNYKIQALGLGEDWNVEKGTSAGGGQKVRLLKKALEKHADKEDLVILFADSYDVLFASGPRELLKKFRQARSQVVFSAEELIYPDRRLETKYPVVSDGKRFLGSGGFIGYAPNLSKLVAEWEGQDSDSDQLFYTKIFLDPEKREQINITLDHRCRIFQNLDGALDEVVLKFEMGHVRARNLAYDTLPVLIHGNGPTKLQLNYLGNYIPRFWTFETGCTVCDEGLRSLKGIGDEALPTVLVGVFIEQPTPFVSLFFQRLLRLHYPQKHMRLFIHNHEQHHKAQVEEFLAQHGSEYQSVKLVGPEVRMANADARNMGADLCRQDRSCTYYFSVDADVALTEPNSLRLLIQQNKNVIAPLMTRHGRLWSNFWGALSADGYYARSEDYVDIVQGRRVGVWNVPYISNIYLIKGSALRGELQSSDLFHHSKLDPDMAFCANIRQQDVFMFLTNRHTLGHLLSLDSYRTTHLHNDLWEVFSNPEDWKEKYIHQNYTKALAGKLVETPCPDVYWFPIFTEVACDELVEEMEHFGQWSLGNNKDNRIQGGYENVPTIDIHMNQIGFEREWHKFLLEYIAPMTEKLYPGYYTRAQFDLAFVVRYKPDEQPSLMPHHDASTFTINIALNRVGVDYEGGGCRFLRYNCSIRAPRKGWTLMHPGRLTHYHEGLPTTRGTRYIAVSFVDP.

Positions 1-18 (MRPLLLLALLGWLLLAEA) are cleaved as a signal peptide. Asn163, Asn197, and Asn538 each carry an N-linked (GlcNAc...) asparagine glycan. Positions 636 to 727 (QFDLAFVVRY…RYIAVSFVDP (92 aa)) constitute a Fe2OG dioxygenase domain. Fe cation is bound by residues His656 and Asp658. A glycan (N-linked (GlcNAc...) asparagine) is linked at Asn686. His708 lines the Fe cation pocket. Arg718 is a catalytic residue.

In terms of assembly, homodimer. Identified in a complex with P3H3 and P3H4. Fe(2+) is required as a cofactor. L-ascorbate serves as cofactor.

Its subcellular location is the rough endoplasmic reticulum membrane. The catalysed reaction is L-lysyl-[collagen] + 2-oxoglutarate + O2 = (5R)-5-hydroxy-L-lysyl-[collagen] + succinate + CO2. Functionally, part of a complex composed of PLOD1, P3H3 and P3H4 that catalyzes hydroxylation of lysine residues in collagen alpha chains and is required for normal assembly and cross-linkling of collagen fibrils. Forms hydroxylysine residues in -Xaa-Lys-Gly- sequences in collagens. These hydroxylysines serve as sites of attachment for carbohydrate units and are essential for the stability of the intermolecular collagen cross-links. In Homo sapiens (Human), this protein is Procollagen-lysine,2-oxoglutarate 5-dioxygenase 1 (PLOD1).